A 437-amino-acid polypeptide reads, in one-letter code: Elongation factor 1-gamma (437 aa).

An N-acetylalanine modification is found at Ala-2. Residues 2 to 87 (AAGTLYTYPE…YVSNEELRGS (86 aa)) enclose the GST N-terminal domain. A GST C-terminal domain is found at 88-216 (TPEAAAQVVQ…VKLCEKMAQF (129 aa)). N6-acetyllysine is present on residues Lys-147 and Lys-212. Basic and acidic residues predominate over residues 221 to 254 (FAETQPKKDTPRKEKGSREEKQKPQAERKEEKKA). Residues 221–268 (FAETQPKKDTPRKEKGSREEKQKPQAERKEEKKAAAPAPEEEMDECEQ) form a disordered region. A Glycyl lysine isopeptide (Lys-Gly) (interchain with G-Cter in SUMO1) cross-link involves residue Lys-253. The EF-1-gamma C-terminal domain occupies 276–437 (AKDPFAHLPK…KAFNQGKIFK (162 aa)). Lys-285 participates in a covalent cross-link: Glycyl lysine isopeptide (Lys-Gly) (interchain with G-Cter in SUMO2). Lys-401 bears the N6-acetyllysine mark. Lys-434 is subject to N6-acetyllysine; alternate. Lys-434 bears the N6-malonyllysine; alternate mark.

EF-1 is composed of four subunits: alpha, beta, delta, and gamma. As to expression, highly expressed in pancreatic tumor tissue and to a lesser extent in normal kidney, intestine, pancreas, stomach, lung, brain, spleen and liver.

Functionally, probably plays a role in anchoring the complex to other cellular components. This chain is Elongation factor 1-gamma (EEF1G), found in Homo sapiens (Human).